Here is a 63-residue protein sequence, read N- to C-terminus: Cecropin-C (63 aa).

Positions 1–23 are cleaved as a signal peptide; sequence MNFNKIFVFVALILAISLGQSEA. Arg62 carries the post-translational modification Arginine amide.

This sequence belongs to the cecropin family.

It is found in the secreted. Its function is as follows. Cecropins have lytic and antibacterial activity against several Gram-positive and Gram-negative bacteria. This chain is Cecropin-C (CecC), found in Drosophila orena (Fruit fly).